The sequence spans 325 residues: Reaction center protein M chain (325 aa).

Transmembrane regions (helical) follow at residues 54–80 (LGPL…LASV), 111–140 (NDGG…RARA), and 143–168 (MGTH…RPVL). (7R,8Z)-bacteriochlorophyll b-binding residues include His183 and His203. The chain crosses the membrane as a helical span at residues 198-226 (FYNPFHALSIAFLYGATLLFAMHGATILA). 2 residues coordinate Fe cation: His220 and Glu235. Residue Trp253 participates in a ubiquinone binding. The chain crosses the membrane as a helical span at residues 260 to 286 (NATTESIHRWAWWFAVLCPLCGGIGIL). Residue His267 coordinates Fe cation.

It belongs to the reaction center PufL/M/PsbA/D family. Reaction center is composed of four bacteriochlorophylls, two bacteriopheophytins, two ubiquinones, one iron, and three highly hydrophobic polypeptide chains (designated L, M, and H).

It localises to the cell inner membrane. The reaction center is a membrane-bound complex that mediates the initial photochemical event in the electron transfer process of photosynthesis. This chain is Reaction center protein M chain (pufM), found in Rubrivivax gelatinosus (strain NBRC 100245 / IL144).